An 84-amino-acid chain; its full sequence is Insulin-like peptide 05 (84 aa).

Residues 1-22 form the signal peptide; that stretch reads MKTPILFVVVVAVLIVTDSAEG. Residues 23 to 37 constitute a propeptide that is removed on maturation; sequence FKGKANSFLKPLQRR. Disulfide bonds link C43-C48, C44-C73, and C57-C61.

The protein belongs to the insulin family.

The protein resides in the secreted. In terms of biological role, insulin decreases blood glucose concentration. May have evolved to activate insulin receptors (INSR) in vertebrates. Molecular docking studies reveals unique interaction with the human insulin receptor. In vivo, insulin-like peptide injection reduces blood glucose levels in two models of zebrafish diabetes (streptozotocin- and glucose-induced). Also shorter swimming distance of zebrafish larvae, an effect which is not observed with human insulin. The polypeptide is Insulin-like peptide 05 (Exaiptasia diaphana (Tropical sea anemone)).